The primary structure comprises 139 residues: Protein cornichon homolog 4 (139 aa).

3 helical membrane passes run 5-25 (VFLF…YFII), 57-77 (IVTV…NLPV), and 118-138 (LGFY…ALIN).

Belongs to the cornichon family. As to quaternary structure, interacts with Sec23/24 complex components SEC24B and SEC24D. Interacts with CCR5. Interacts with ADRB2 in the early secretory pathway.

The protein resides in the membrane. Its subcellular location is the endoplasmic reticulum. It localises to the endoplasmic reticulum-Golgi intermediate compartment. Involved in G protein-coupled receptors (GPCRs) trafficking from the endoplasmic reticulum to the cell surface; it promotes the exit of GPCRs from the early secretory pathway, likely through interaction with the COPII machinery. This is Protein cornichon homolog 4 (Cnih4) from Mus musculus (Mouse).